Consider the following 1192-residue polypeptide: Integrator complex subunit 2 (1192 aa).

The helical transmembrane segment at 420-436 threads the bilayer; it reads FVSLSFCMLLAFSTLVS.

The protein belongs to the Integrator subunit 2 family. As to quaternary structure, component of the Integrator complex, composed of core subunits INTS1, INTS2, INTS3, INTS4, INTS5, INTS6, INTS7, INTS8, INTS9/RC74, INTS10, INTS11/CPSF3L, INTS12, INTS13, INTS14 and INTS15. The core complex associates with protein phosphatase 2A subunits PPP2CA and PPP2R1A, to form the Integrator-PP2A (INTAC) complex.

The protein localises to the nucleus. Its subcellular location is the nucleus membrane. The protein resides in the cytoplasm. Its function is as follows. Component of the integrator complex, a multiprotein complex that terminates RNA polymerase II (Pol II) transcription in the promoter-proximal region of genes. The integrator complex provides a quality checkpoint during transcription elongation by driving premature transcription termination of transcripts that are unfavorably configured for transcriptional elongation: the complex terminates transcription by (1) catalyzing dephosphorylation of the C-terminal domain (CTD) of Pol II subunit POLR2A/RPB1 and SUPT5H/SPT5, (2) degrading the exiting nascent RNA transcript via endonuclease activity and (3) promoting the release of Pol II from bound DNA. The integrator complex is also involved in terminating the synthesis of non-coding Pol II transcripts, such as enhancer RNAs (eRNAs), small nuclear RNAs (snRNAs), telomerase RNAs and long non-coding RNAs (lncRNAs). The protein is Integrator complex subunit 2 (INTS2) of Gallus gallus (Chicken).